A 92-amino-acid polypeptide reads, in one-letter code: Small ribosomal subunit protein uS19 (92 aa).

This sequence belongs to the universal ribosomal protein uS19 family.

Its function is as follows. Protein S19 forms a complex with S13 that binds strongly to the 16S ribosomal RNA. The polypeptide is Small ribosomal subunit protein uS19 (Shewanella putrefaciens (strain CN-32 / ATCC BAA-453)).